The sequence spans 128 residues: Azurin (128 aa).

The Plastocyanin-like domain maps to 1–128 (AECKTTIDST…SMMKGTVTLK (128 aa)). Cysteines 3 and 26 form a disulfide. The Cu cation site is built by histidine 46, cysteine 112, histidine 117, and methionine 121.

It localises to the periplasm. Functionally, transfers electrons from cytochrome c551 to cytochrome oxidase. The protein is Azurin of Pseudomonas fluorescens biotype B.